The primary structure comprises 75 residues: DNA-directed RNA polymerase subunit epsilon (75 aa).

The protein belongs to the RNA polymerase subunit epsilon family. RNAP is composed of a core of 2 alpha, a beta and a beta' subunit. The core is associated with a delta subunit, and at least one of epsilon or omega. When a sigma factor is associated with the core the holoenzyme is formed, which can initiate transcription.

The enzyme catalyses RNA(n) + a ribonucleoside 5'-triphosphate = RNA(n+1) + diphosphate. Functionally, a non-essential component of RNA polymerase (RNAP). This chain is DNA-directed RNA polymerase subunit epsilon, found in Lactobacillus johnsonii (strain CNCM I-12250 / La1 / NCC 533).